Consider the following 764-residue polypeptide: 5-methyltetrahydropteroyltriglutamate--homocysteine methyltransferase (764 aa).

5-methyltetrahydropteroyltri-L-glutamate contacts are provided by residues 16–19 and K115; that span reads RELK. L-homocysteine is bound by residues 435 to 437 and E488; that span reads IGS. Residues 435-437 and E488 each bind L-methionine; that span reads IGS. 5-methyltetrahydropteroyltri-L-glutamate contacts are provided by residues 519–520 and W565; that span reads RC. D603 contributes to the L-homocysteine binding site. D603 lines the L-methionine pocket. A 5-methyltetrahydropteroyltri-L-glutamate-binding site is contributed by E609. Zn(2+) contacts are provided by H645, C647, and E669. H698 serves as the catalytic Proton donor. Residue C730 participates in Zn(2+) binding.

It belongs to the vitamin-B12 independent methionine synthase family. It depends on Zn(2+) as a cofactor.

It catalyses the reaction 5-methyltetrahydropteroyltri-L-glutamate + L-homocysteine = tetrahydropteroyltri-L-glutamate + L-methionine. Its pathway is amino-acid biosynthesis; L-methionine biosynthesis via de novo pathway; L-methionine from L-homocysteine (MetE route): step 1/1. Catalyzes the transfer of a methyl group from 5-methyltetrahydrofolate to homocysteine resulting in methionine formation. This is 5-methyltetrahydropteroyltriglutamate--homocysteine methyltransferase from Burkholderia mallei (strain NCTC 10247).